The following is a 439-amino-acid chain: Ribosomal protein uS12 methylthiotransferase RimO (439 aa).

One can recognise an MTTase N-terminal domain in the interval 3–113 (HKVGFVSLGC…VVNAVHQHLP (111 aa)). Positions 12, 48, 77, 144, 148, and 151 each coordinate [4Fe-4S] cluster. Positions 130–367 (LTPRHYAYLK…MQVQAEISRN (238 aa)) constitute a Radical SAM core domain. The region spanning 370–436 (KNKIGSTQTV…DYDLYGDLEY (67 aa)) is the TRAM domain.

This sequence belongs to the methylthiotransferase family. RimO subfamily. It depends on [4Fe-4S] cluster as a cofactor.

It is found in the cytoplasm. It catalyses the reaction L-aspartate(89)-[ribosomal protein uS12]-hydrogen + (sulfur carrier)-SH + AH2 + 2 S-adenosyl-L-methionine = 3-methylsulfanyl-L-aspartate(89)-[ribosomal protein uS12]-hydrogen + (sulfur carrier)-H + 5'-deoxyadenosine + L-methionine + A + S-adenosyl-L-homocysteine + 2 H(+). Catalyzes the methylthiolation of an aspartic acid residue of ribosomal protein uS12. This chain is Ribosomal protein uS12 methylthiotransferase RimO, found in Legionella pneumophila (strain Corby).